Here is a 341-residue protein sequence, read N- to C-terminus: uncharacterized protein (341 aa).

The disordered stretch occupies residues 125–146 (DTVKHNGSGPRPEQASSHVHYS).

It belongs to the cycloisomerase 2 family.

This is an uncharacterized protein from Lactococcus lactis subsp. cremoris (strain MG1363).